We begin with the raw amino-acid sequence, 1241 residues long: ATP-dependent helicase/nuclease subunit A (1241 aa).

The region spanning 12-485 is the UvrD-like helicase ATP-binding domain; sequence SQWTDDQWKA…IDLAKNFRSR (474 aa). Residue 33–40 participates in ATP binding; sequence AAAGSGKT. The 301-residue stretch at 505-805 folds into the UvrD-like helicase C-terminal domain; sequence GEIDYDADAE…RIMTIHKSKG (301 aa).

The protein belongs to the helicase family. AddA subfamily. As to quaternary structure, heterodimer of AddA and AddB/RexB. Mg(2+) serves as cofactor.

The catalysed reaction is Couples ATP hydrolysis with the unwinding of duplex DNA by translocating in the 3'-5' direction.. It catalyses the reaction ATP + H2O = ADP + phosphate + H(+). Functionally, the heterodimer acts as both an ATP-dependent DNA helicase and an ATP-dependent, dual-direction single-stranded exonuclease. Recognizes the chi site generating a DNA molecule suitable for the initiation of homologous recombination. The AddA nuclease domain is required for chi fragment generation; this subunit has the helicase and 3' -&gt; 5' nuclease activities. The sequence is that of ATP-dependent helicase/nuclease subunit A from Bacillus anthracis.